The primary structure comprises 239 residues: mRNA turnover protein 4 homolog (239 aa).

The segment at 215-239 is disordered; it reads FQQMGDDLPESASESTEESDSEDDD. A phosphoserine mark is found at serine 225, serine 229, and serine 233. Acidic residues predominate over residues 229–239; the sequence is STEESDSEDDD.

Belongs to the universal ribosomal protein uL10 family. In terms of assembly, associates with the pre-60S ribosomal particle. Interacts with MINAS-60 (product of an alternative open reading frame of RBM10).

Its subcellular location is the nucleus. The protein localises to the nucleolus. It is found in the cytoplasm. In terms of biological role, component of the ribosome assembly machinery. Nuclear paralog of the ribosomal protein P0, it binds pre-60S subunits at an early stage of assembly in the nucleolus, and is replaced by P0 in cytoplasmic pre-60S subunits and mature 80S ribosomes. The sequence is that of mRNA turnover protein 4 homolog (MRTO4) from Homo sapiens (Human).